The following is a 219-amino-acid chain: Phosphatidylserine decarboxylase proenzyme (219 aa).

Residue S188 is the Schiff-base intermediate with substrate; via pyruvic acid of the active site. S188 is subject to Pyruvic acid (Ser); by autocatalysis.

Belongs to the phosphatidylserine decarboxylase family. PSD-A subfamily. In terms of assembly, heterodimer of a large membrane-associated beta subunit and a small pyruvoyl-containing alpha subunit. Pyruvate is required as a cofactor. Is synthesized initially as an inactive proenzyme. Formation of the active enzyme involves a self-maturation process in which the active site pyruvoyl group is generated from an internal serine residue via an autocatalytic post-translational modification. Two non-identical subunits are generated from the proenzyme in this reaction, and the pyruvate is formed at the N-terminus of the alpha chain, which is derived from the carboxyl end of the proenzyme. The post-translation cleavage follows an unusual pathway, termed non-hydrolytic serinolysis, in which the side chain hydroxyl group of the serine supplies its oxygen atom to form the C-terminus of the beta chain, while the remainder of the serine residue undergoes an oxidative deamination to produce ammonia and the pyruvoyl prosthetic group on the alpha chain.

The protein localises to the cell membrane. It carries out the reaction a 1,2-diacyl-sn-glycero-3-phospho-L-serine + H(+) = a 1,2-diacyl-sn-glycero-3-phosphoethanolamine + CO2. The protein operates within phospholipid metabolism; phosphatidylethanolamine biosynthesis; phosphatidylethanolamine from CDP-diacylglycerol: step 2/2. In terms of biological role, catalyzes the formation of phosphatidylethanolamine (PtdEtn) from phosphatidylserine (PtdSer). This chain is Phosphatidylserine decarboxylase proenzyme, found in Trichlorobacter lovleyi (strain ATCC BAA-1151 / DSM 17278 / SZ) (Geobacter lovleyi).